Consider the following 200-residue polypeptide: Holliday junction branch migration complex subunit RuvA (200 aa).

Residues 1–64 (MYAYFRGRLV…EDALQLYGFA (64 aa)) are domain I. Positions 65-143 (TEEEKQLFRL…KLAPVGSAVA (79 aa)) are domain II. The flexible linker stretch occupies residues 144 to 154 (SVAADRGGFRE). A domain III region spans residues 154–200 (EDAVNALMTLGFPRPVANQAVGCALEPEPDASLEVVIKRALATMHNR).

This sequence belongs to the RuvA family. As to quaternary structure, homotetramer. Forms an RuvA(8)-RuvB(12)-Holliday junction (HJ) complex. HJ DNA is sandwiched between 2 RuvA tetramers; dsDNA enters through RuvA and exits via RuvB. An RuvB hexamer assembles on each DNA strand where it exits the tetramer. Each RuvB hexamer is contacted by two RuvA subunits (via domain III) on 2 adjacent RuvB subunits; this complex drives branch migration. In the full resolvosome a probable DNA-RuvA(4)-RuvB(12)-RuvC(2) complex forms which resolves the HJ.

Its subcellular location is the cytoplasm. Its function is as follows. The RuvA-RuvB-RuvC complex processes Holliday junction (HJ) DNA during genetic recombination and DNA repair, while the RuvA-RuvB complex plays an important role in the rescue of blocked DNA replication forks via replication fork reversal (RFR). RuvA specifically binds to HJ cruciform DNA, conferring on it an open structure. The RuvB hexamer acts as an ATP-dependent pump, pulling dsDNA into and through the RuvAB complex. HJ branch migration allows RuvC to scan DNA until it finds its consensus sequence, where it cleaves and resolves the cruciform DNA. The protein is Holliday junction branch migration complex subunit RuvA of Chlorobium phaeovibrioides (strain DSM 265 / 1930) (Prosthecochloris vibrioformis (strain DSM 265)).